The chain runs to 805 residues: Sucrose synthase (805 aa).

Residues 275–752 (MVFNVVILSP…GLQRIEEKYT (478 aa)) form a GT-B glycosyltransferase region.

Belongs to the glycosyltransferase 1 family. Plant sucrose synthase subfamily.

The enzyme catalyses an NDP-alpha-D-glucose + D-fructose = a ribonucleoside 5'-diphosphate + sucrose + H(+). Functionally, sucrose-cleaving enzyme that provides UDP-glucose and fructose for various metabolic pathways. This Medicago sativa (Alfalfa) protein is Sucrose synthase.